The primary structure comprises 130 residues: Small ribosomal subunit protein bS16 (130 aa).

Positions 82–130 (VLPKTERNNPKKAVPGKKAQDRAEEKAAKAAEASEAPADEAPAEEAAAE) are disordered. Residues 99 to 110 (KAQDRAEEKAAK) are compositionally biased toward basic and acidic residues. Acidic residues predominate over residues 118-130 (PADEAPAEEAAAE).

It belongs to the bacterial ribosomal protein bS16 family.

This chain is Small ribosomal subunit protein bS16, found in Dinoroseobacter shibae (strain DSM 16493 / NCIMB 14021 / DFL 12).